We begin with the raw amino-acid sequence, 344 residues long: N-acetyl-gamma-glutamyl-phosphate reductase (344 aa).

The active site involves Cys148.

The protein belongs to the NAGSA dehydrogenase family. Type 1 subfamily.

The protein localises to the cytoplasm. The enzyme catalyses N-acetyl-L-glutamate 5-semialdehyde + phosphate + NADP(+) = N-acetyl-L-glutamyl 5-phosphate + NADPH + H(+). It participates in amino-acid biosynthesis; L-arginine biosynthesis; N(2)-acetyl-L-ornithine from L-glutamate: step 3/4. Functionally, catalyzes the NADPH-dependent reduction of N-acetyl-5-glutamyl phosphate to yield N-acetyl-L-glutamate 5-semialdehyde. This is N-acetyl-gamma-glutamyl-phosphate reductase from Geobacillus kaustophilus (strain HTA426).